Reading from the N-terminus, the 239-residue chain is Pentatricopeptide repeat-containing protein DWY1, chloroplastic (239 aa).

A chloroplast-targeting transit peptide spans 1-35 (MALEAAFSMSFCSFSVPKAIFCERETSSFQRITSR). Disordered stretches follow at residues 40 to 59 (AGESQVQSSDGVETQVKETS) and 101 to 122 (HISPSSHSTKVRGDKPEISGGE). Positions 111-122 (VRGDKPEISGGE) are enriched in basic and acidic residues. The tract at residues 113-144 (GDKPEISGGEKKAIVDRSKAYVKLKSLGKEVR) is type E(+) motif. The type DYW motif stretch occupies residues 145-239 (DAGYVPETKY…DGNCSCGDYW (95 aa)).

This sequence belongs to the PPR family. PCMP-H subfamily. In terms of assembly, interacts with CRR4. The cofactor is Zn(2+).

It is found in the plastid. The protein localises to the chloroplast. Functionally, plays a major role in single RNA editing events in chloroplasts. Acts as a site-recognition transacting factor involved in the edition of the site 1 of ndhD (ndhD-1 site corresponding to cytidine-2), which is a plastid-encoded subunit of the NADH-plastoquinone oxidoreductase. The interaction with CRR4 is required for its function in editing the ndhD-1 site. This Arabidopsis thaliana (Mouse-ear cress) protein is Pentatricopeptide repeat-containing protein DWY1, chloroplastic.